A 65-amino-acid polypeptide reads, in one-letter code: Large ribosomal subunit protein bL35 (65 aa).

The protein belongs to the bacterial ribosomal protein bL35 family.

The sequence is that of Large ribosomal subunit protein bL35 from Baumannia cicadellinicola subsp. Homalodisca coagulata.